A 180-amino-acid chain; its full sequence is Erythropoietin (180 aa).

An N-terminal signal peptide occupies residues 1–20 (MTGLLAFLLIVLEWTRPSLP). 2 disulfides stabilise this stretch: C27–C175 and C49–C53. N75 carries an N-linked (GlcNAc...) asparagine glycan.

Belongs to the EPO/TPO family.

It is found in the secreted. Its function is as follows. Erythropoietin is the principal hormone involved in the regulation of erythrocyte differentiation and the maintenance of a physiological level of circulating erythrocyte mass. The protein is Erythropoietin (epo) of Tetraodon nigroviridis (Spotted green pufferfish).